A 284-amino-acid chain; its full sequence is L-ribulose-5-phosphate 3-epimerase UlaE (284 aa).

It belongs to the L-ribulose-5-phosphate 3-epimerase family.

It catalyses the reaction L-ribulose 5-phosphate = L-xylulose 5-phosphate. Its pathway is cofactor degradation; L-ascorbate degradation; D-xylulose 5-phosphate from L-ascorbate: step 3/4. Its function is as follows. Catalyzes the isomerization of L-xylulose-5-phosphate to L-ribulose-5-phosphate. Is involved in the anaerobic L-ascorbate utilization. This chain is L-ribulose-5-phosphate 3-epimerase UlaE, found in Salmonella typhimurium (strain LT2 / SGSC1412 / ATCC 700720).